We begin with the raw amino-acid sequence, 718 residues long: Exostosin-2 (718 aa).

The Cytoplasmic segment spans residues 1-25 (MCASVKYNIRGPALIPRMKTKHRIY). Residues 26–46 (YITLFSIVLLGLIATGMFQFW) traverse the membrane as a helical; Signal-anchor for type II membrane protein segment. Residues 47 to 718 (PHSIESSGDW…LKSFPNIGSL (672 aa)) lie on the Lumenal side of the membrane. 4 disulfides stabilise this stretch: Cys85–Cys90, Cys96–Cys151, Cys286–Cys300, and Cys318–Cys339. The N-linked (GlcNAc...) asparagine glycan is linked to Asn288. Residues Leu461, Arg465, Asn490, and Asn517 each coordinate UDP. The UDP-N-acetyl-alpha-D-glucosamine site is built by Arg465, Asn490, Asn517, Arg522, Asp538, Asp539, and Asp540. Residues Asp538 and Asp539 each contribute to the UDP site. Asp540 contacts Mn(2+). Residues Tyr582 and Ser584 each coordinate a protein. A disulfide bridge links Cys626 with Cys676. Positions 627 and 628 each coordinate UDP-N-acetyl-alpha-D-glucosamine. The N-linked (GlcNAc...) asparagine glycan is linked to Asn637. 2 residues coordinate a protein: Lys651 and Lys653. A UDP-N-acetyl-alpha-D-glucosamine-binding site is contributed by Arg673.

This sequence belongs to the glycosyltransferase 47 family. Part of the heparan sulfate polymerase, a dimeric complex composed of EXT1 and EXT2. Could also form homooligomeric complexes. Interacts with NDST1. Interacts with GALNT5. It depends on Mn(2+) as a cofactor. Post-translationally, a soluble form is generated by proteolytic processing. In terms of processing, N-glycosylated at Asn-637.

It localises to the golgi apparatus membrane. The protein localises to the golgi apparatus. The protein resides in the cis-Golgi network membrane. It is found in the endoplasmic reticulum membrane. Its subcellular location is the secreted. It carries out the reaction 3-O-{[(1-&gt;4)-beta-D-GlcA-(1-&gt;4)-alpha-D-GlcNAc](n)-(1-&gt;4)-beta-D-GlcA-(1-&gt;3)-beta-D-Gal-(1-&gt;3)-beta-D-Gal-(1-&gt;4)-beta-D-Xyl}-L-seryl-[protein] + UDP-N-acetyl-alpha-D-glucosamine = 3-O-{alpha-D-GlcNAc-[(1-&gt;4)-beta-D-GlcA-(1-&gt;4)-alpha-D-GlcNAc](n)-(1-&gt;4)-beta-D-GlcA-(1-&gt;3)-beta-D-Gal-(1-&gt;3)-beta-D-Gal-(1-&gt;4)-beta-D-Xyl}-L-seryl-[protein] + UDP + H(+). The protein operates within protein modification; protein glycosylation. Functionally, glycosyltransferase forming with EXT1 the heterodimeric heparan sulfate polymerase which catalyzes the elongation of the heparan sulfate glycan backbone. Glycan backbone extension consists in the alternating transfer of (1-&gt;4)-beta-D-GlcA and (1-&gt;4)-alpha-D-GlcNAc residues from their respective UDP-sugar donors. Both EXT1 and EXT2 are required for the full activity of the polymerase since EXT1 bears the N-acetylglucosaminyl-proteoglycan 4-beta-glucuronosyltransferase activity within the complex while EXT2 carries the glucuronosyl-N-acetylglucosaminyl-proteoglycan 4-alpha-N-acetylglucosaminyltransferase activity. Heparan sulfate proteoglycans are ubiquitous components of the extracellular matrix and play an important role in tissue homeostasis and signaling. In Bos taurus (Bovine), this protein is Exostosin-2.